A 156-amino-acid polypeptide reads, in one-letter code: Small ribosomal subunit protein uS7 (156 aa).

Belongs to the universal ribosomal protein uS7 family. As to quaternary structure, part of the 30S ribosomal subunit. Contacts proteins S9 and S11.

One of the primary rRNA binding proteins, it binds directly to 16S rRNA where it nucleates assembly of the head domain of the 30S subunit. Is located at the subunit interface close to the decoding center, probably blocks exit of the E-site tRNA. In Mycobacterium sp. (strain JLS), this protein is Small ribosomal subunit protein uS7.